The sequence spans 393 residues: Methylthioribose kinase (393 aa).

ATP contacts are provided by residues N38, K53, and 107-109 (EDL). Position 225 (D225) interacts with substrate. Position 242–244 (242–244 (DPE)) interacts with ATP. Position 332 (R332) interacts with substrate.

The protein belongs to the methylthioribose kinase family. Homodimer.

It carries out the reaction 5-(methylsulfanyl)-D-ribose + ATP = 5-(methylsulfanyl)-alpha-D-ribose 1-phosphate + ADP + H(+). It participates in amino-acid biosynthesis; L-methionine biosynthesis via salvage pathway; S-methyl-5-thio-alpha-D-ribose 1-phosphate from S-methyl-5'-thioadenosine (hydrolase route): step 2/2. Its function is as follows. Catalyzes the phosphorylation of methylthioribose into methylthioribose-1-phosphate. This chain is Methylthioribose kinase, found in Bacillus cereus (strain AH187).